We begin with the raw amino-acid sequence, 229 residues long: Meiotically up-regulated gene 31 protein (229 aa).

Disordered regions lie at residues 16–68 (EDSA…EEDK) and 189–229 (GLPE…TTWA).

It localises to the endoplasmic reticulum. In terms of biological role, has a role in meiosis. This is Meiotically up-regulated gene 31 protein (mug31) from Schizosaccharomyces pombe (strain 972 / ATCC 24843) (Fission yeast).